A 528-amino-acid polypeptide reads, in one-letter code: Oxamate amidohydrolase proenzyme (528 aa).

Residue T342 is the Nucleophile of the active site. 424–425 (GG) lines the substrate pocket.

This sequence belongs to the gamma-glutamyltransferase family. In terms of assembly, heterodimer that consists of a 35.5 kDa large (alpha) subunit and a 20 kDa small (beta) subunit, which are synthesized from a single polypeptide. Cleaved by autocatalysis into a large (alpha) and a small (beta) subunit.

It catalyses the reaction oxamate + H2O = oxalate + NH4(+). Involved in the uric acid degradation pathway. Catalyzes the conversion of oxamate to oxalate. In Klebsiella pneumoniae subsp. pneumoniae (strain ATCC 700721 / MGH 78578), this protein is Oxamate amidohydrolase proenzyme.